The sequence spans 76 residues: Large ribosomal subunit protein bL28 (76 aa).

Positions 21 to 42 (RGKAKKEGGVGKHITKTSRRRQ) are disordered. Residues 33–42 (HITKTSRRRQ) show a composition bias toward basic residues.

This sequence belongs to the bacterial ribosomal protein bL28 family.

The chain is Large ribosomal subunit protein bL28 from Halothermothrix orenii (strain H 168 / OCM 544 / DSM 9562).